The sequence spans 255 residues: Leucyl/phenylalanyl-tRNA--protein transferase (255 aa).

Belongs to the L/F-transferase family.

It localises to the cytoplasm. It catalyses the reaction N-terminal L-lysyl-[protein] + L-leucyl-tRNA(Leu) = N-terminal L-leucyl-L-lysyl-[protein] + tRNA(Leu) + H(+). The catalysed reaction is N-terminal L-arginyl-[protein] + L-leucyl-tRNA(Leu) = N-terminal L-leucyl-L-arginyl-[protein] + tRNA(Leu) + H(+). The enzyme catalyses L-phenylalanyl-tRNA(Phe) + an N-terminal L-alpha-aminoacyl-[protein] = an N-terminal L-phenylalanyl-L-alpha-aminoacyl-[protein] + tRNA(Phe). Functionally, functions in the N-end rule pathway of protein degradation where it conjugates Leu, Phe and, less efficiently, Met from aminoacyl-tRNAs to the N-termini of proteins containing an N-terminal arginine or lysine. The protein is Leucyl/phenylalanyl-tRNA--protein transferase of Polaromonas sp. (strain JS666 / ATCC BAA-500).